The primary structure comprises 133 residues: Ribonuclease P protein component (133 aa).

The protein belongs to the RnpA family. Consists of a catalytic RNA component (M1 or rnpB) and a protein subunit.

It carries out the reaction Endonucleolytic cleavage of RNA, removing 5'-extranucleotides from tRNA precursor.. Its function is as follows. RNaseP catalyzes the removal of the 5'-leader sequence from pre-tRNA to produce the mature 5'-terminus. It can also cleave other RNA substrates such as 4.5S RNA. The protein component plays an auxiliary but essential role in vivo by binding to the 5'-leader sequence and broadening the substrate specificity of the ribozyme. The protein is Ribonuclease P protein component of Pseudomonas entomophila (strain L48).